Here is a 186-residue protein sequence, read N- to C-terminus: Large ribosomal subunit protein uL10 (186 aa).

Belongs to the universal ribosomal protein uL10 family. In terms of assembly, part of the ribosomal stalk of the 50S ribosomal subunit. The N-terminus interacts with L11 and the large rRNA to form the base of the stalk. The C-terminus forms an elongated spine to which L12 dimers bind in a sequential fashion forming a multimeric L10(L12)X complex.

In terms of biological role, forms part of the ribosomal stalk, playing a central role in the interaction of the ribosome with GTP-bound translation factors. In Rhodococcus jostii (strain RHA1), this protein is Large ribosomal subunit protein uL10.